A 418-amino-acid polypeptide reads, in one-letter code: Serine/threonine transporter SstT (418 aa).

8 consecutive transmembrane segments (helical) span residues 21–41 (ILIGLVAGIVLALVSTPAAIA), 49–69 (FVGALKAVAPVLVLMLVIASI), 83–103 (ILFLYVLGTFSAALVAVVVSF), 142–162 (ALLNANYIGILAWAVGLGIAL), 190–210 (FAPLGIFGLVASTIAATGFGA), 217–237 (LLVVLIGCMLLVALVVNPLIV), 299–319 (MAGAAITITVLTLAAVHTLGI), and 331–351 (VVAAICACGASGVAGGSLLLI).

This sequence belongs to the dicarboxylate/amino acid:cation symporter (DAACS) (TC 2.A.23) family.

It is found in the cell inner membrane. It catalyses the reaction L-serine(in) + Na(+)(in) = L-serine(out) + Na(+)(out). The enzyme catalyses L-threonine(in) + Na(+)(in) = L-threonine(out) + Na(+)(out). Its function is as follows. Involved in the import of serine and threonine into the cell, with the concomitant import of sodium (symport system). In Yersinia pestis bv. Antiqua (strain Antiqua), this protein is Serine/threonine transporter SstT.